The chain runs to 281 residues: Large ribosomal subunit protein uL22 (281 aa).

The segment at 1 to 225 (MASPMGSTAS…KAGGAAEAEV (225 aa)) is large ribosomal subunit protein uL22. Disordered regions lie at residues 137-175 (RATK…PVAA) and 199-281 (AVAS…GGTR). Basic residues predominate over residues 139 to 153 (TKKAVPKGARHRRRL). Composition is skewed to low complexity over residues 159–175 (PAAS…PVAA) and 199–239 (AVAS…APAA). The segment at 226–281 (ATTDEQTTETAPAAEAEKPAVRRPAARKSTTSARRRAAETEGHDSDAESTDEGGTR) is unknown. Over residues 261–271 (RAAETEGHDSD) the composition is skewed to basic and acidic residues. Positions 272-281 (AESTDEGGTR) are enriched in acidic residues.

Belongs to the universal ribosomal protein uL22 family. As to quaternary structure, part of the 50S ribosomal subunit.

Its function is as follows. The globular domain of the protein is located near the polypeptide exit tunnel on the outside of the subunit, while an extended beta-hairpin is found that lines the wall of the exit tunnel in the center of the 70S ribosome. In terms of biological role, this protein binds specifically to 23S rRNA; its binding is stimulated by other ribosomal proteins, e.g. L4, L17, and L20. It is important during the early stages of 50S assembly. It makes multiple contacts with different domains of the 23S rRNA in the assembled 50S subunit and ribosome. The polypeptide is Large ribosomal subunit protein uL22 (Acidothermus cellulolyticus (strain ATCC 43068 / DSM 8971 / 11B)).